A 414-amino-acid chain; its full sequence is uncharacterized protein (414 aa).

Positions 1–18 are cleaved as a signal peptide; the sequence is MLKRLMLASAILPVVSFA.

This is an uncharacterized protein from Aquifex aeolicus (strain VF5).